The chain runs to 199 residues: Oleosin 21.2 kDa (199 aa).

The span at 1–14 (MADTHRVDRTDRHF) shows a compositional bias: basic and acidic residues. Residues 1–31 (MADTHRVDRTDRHFQFQSPYEGGRGQGQYEG) form a disordered region. Alanine 2 bears the N-acetylalanine mark. Residues 2–56 (ADTHRVDRTDRHFQFQSPYEGGRGQGQYEGDRGYGGGGYKSMMPESGPSSTQVLS) form a polar region. A compositionally biased stretch (gly residues) spans 22 to 31 (GGRGQGQYEG). 3 helical membrane-spanning segments follow: residues 51–71 (STQV…LALA), 72–92 (GLLL…FLLF), and 96–116 (IVPA…SGMF). The tract at residues 57–128 (LLIGVPVVGS…TGLSSISWVM (72 aa)) is hydrophobic. Residues 159–199 (KGKEMGQHVQNKAQDVKQYDISKPHDTTTKGHETQGRTTAA) are disordered. Over residues 172-193 (QDVKQYDISKPHDTTTKGHETQ) the composition is skewed to basic and acidic residues.

Belongs to the oleosin family.

The protein localises to the lipid droplet. The protein resides in the membrane. Its function is as follows. May have a structural role to stabilize the lipid body during desiccation of the seed by preventing coalescence of the oil. Probably interacts with both lipid and phospholipid moieties of lipid bodies. May also provide recognition signals for specific lipase anchorage in lipolysis during seedling growth. This is Oleosin 21.2 kDa from Arabidopsis thaliana (Mouse-ear cress).